A 142-amino-acid chain; its full sequence is Small heat shock protein IbpB (142 aa).

One can recognise a sHSP domain in the interval 26–137; sequence AGESQSFPPY…AAQRIAISER (112 aa).

It belongs to the small heat shock protein (HSP20) family. In terms of assembly, homodimer. Forms homomultimers of about 100-150 subunits at optimal growth temperatures. Conformation changes to oligomers at high temperatures or high ionic concentrations. The decrease in size of the multimers is accompanied by an increase in chaperone activity.

It is found in the cytoplasm. Its function is as follows. Associates with aggregated proteins, together with IbpA, to stabilize and protect them from irreversible denaturation and extensive proteolysis during heat shock and oxidative stress. Aggregated proteins bound to the IbpAB complex are more efficiently refolded and reactivated by the ATP-dependent chaperone systems ClpB and DnaK/DnaJ/GrpE. Its activity is ATP-independent. The chain is Small heat shock protein IbpB from Shigella flexneri serotype 5b (strain 8401).